Reading from the N-terminus, the 391-residue chain is Paired box protein Pax-5 (391 aa).

The interval Met-1–Asn-21 is disordered. Positions Gly-16 to Lys-142 form a DNA-binding region, paired. Residues Gly-19 to Thr-75 form a PAI subdomain region. The RED subdomain stretch occupies residues Lys-94–Lys-142. The segment at Ser-182–Asp-218 is disordered.

In terms of assembly, interacts with ETS1; this interaction alters PAX5 DNA-binding properties. Binds DNA as a monomer. Interacts with TBP; this interaction allows PAX5 to interact with the basal transcription machinery. Interacts with RB1. Interacts with TLE4. Interacts with DAXX. As to quaternary structure, (Microbial infection) Interacts (via N-terminus) with Epstein-Barr virus protein BZLF1 (via C-terminus); this interaction inhibits BZLF1-mediated lytic viral reactivation. Interacts also with EBNA1; this interaction promotes EBNA1-dependent transcription. O-glycosylated. Post-translationally, phosphorylated by SYK. This phosphorylation plays an important role in the abolition of BLIMP1 repression by PAX5 in order to trigger plasma cell differentiation.

It is found in the nucleus. Functionally, transcription factor that plays an essential role in commitment of lymphoid progenitors to the B-lymphocyte lineage. Fulfills a dual role by repressing B-lineage inappropriate genes and simultaneously activating B-lineage-specific genes. In turn, regulates cell adhesion and migration, induces V(H)-to-D(H)J(H) recombination, facilitates pre-B-cell receptor signaling and promotes development to the mature B-cell stage. Repression of the cohesin-release factor WAPL causes global changes of the chromosomal architecture in pro-B cells to facilitate the generation of a diverse antibody repertoire. (Microbial infection) Plays an essential role in the maintenance of Epstein-Barr virus genome copy number within the host cell by promoting EBNA1/oriP-dependent binding and transcription. Also participates in the inhibition of lytic EBV reactivation by modulating viral BZLF1 activity. The polypeptide is Paired box protein Pax-5 (PAX5) (Homo sapiens (Human)).